Here is a 142-residue protein sequence, read N- to C-terminus: Small ribosomal subunit protein uS12 (142 aa).

The interval 1–30 is disordered; it reads MGKTHGMGAARKLKSHRRTQRWADKSYKKS. Positions 11 to 20 are enriched in basic residues; the sequence is RKLKSHRRTQ. Basic and acidic residues predominate over residues 21–30; it reads RWADKSYKKS. P61 bears the Hydroxyproline mark.

Belongs to the universal ribosomal protein uS12 family.

The polypeptide is Small ribosomal subunit protein uS12 (RPS23) (Euphorbia esula (Leafy spurge)).